The following is a 206-amino-acid chain: Large ribosomal subunit protein uL4 (206 aa).

The segment at 43–78 (ARSGNRAQKDREQVKHTTKKPWRQKGTGRARAGMSS) is disordered. The segment covering 58–70 (HTTKKPWRQKGTG) has biased composition (basic residues).

It belongs to the universal ribosomal protein uL4 family. Part of the 50S ribosomal subunit.

Functionally, one of the primary rRNA binding proteins, this protein initially binds near the 5'-end of the 23S rRNA. It is important during the early stages of 50S assembly. It makes multiple contacts with different domains of the 23S rRNA in the assembled 50S subunit and ribosome. Forms part of the polypeptide exit tunnel. In Polynucleobacter necessarius subsp. necessarius (strain STIR1), this protein is Large ribosomal subunit protein uL4.